The chain runs to 525 residues: Light-independent protochlorophyllide reductase subunit B (525 aa).

Position 36 (Asp-36) interacts with [4Fe-4S] cluster. Catalysis depends on Asp-292, which acts as the Proton donor. Substrate is bound at residue 428 to 429; the sequence is GL. Residues 447–470 form a disordered region; the sequence is PSASSENGSAPLSAGTATPAAAPE. A compositionally biased stretch (low complexity) spans 460–470; sequence AGTATPAAAPE.

It belongs to the ChlB/BchB/BchZ family. In terms of assembly, protochlorophyllide reductase is composed of three subunits; BchL, BchN and BchB. Forms a heterotetramer of two BchB and two BchN subunits. [4Fe-4S] cluster serves as cofactor.

The enzyme catalyses chlorophyllide a + oxidized 2[4Fe-4S]-[ferredoxin] + 2 ADP + 2 phosphate = protochlorophyllide a + reduced 2[4Fe-4S]-[ferredoxin] + 2 ATP + 2 H2O. It participates in porphyrin-containing compound metabolism; bacteriochlorophyll biosynthesis (light-independent). Functionally, component of the dark-operative protochlorophyllide reductase (DPOR) that uses Mg-ATP and reduced ferredoxin to reduce ring D of protochlorophyllide (Pchlide) to form chlorophyllide a (Chlide). This reaction is light-independent. The NB-protein (BchN-BchB) is the catalytic component of the complex. This is Light-independent protochlorophyllide reductase subunit B from Chlorobium luteolum (strain DSM 273 / BCRC 81028 / 2530) (Pelodictyon luteolum).